Here is a 453-residue protein sequence, read N- to C-terminus: MQTRQLLALALAVAATEAAHQGFNYGNTKSDGSAKSQSDFAAEFSTAKNLVGTSGFTSARLYTMIQGGTSATPISAIPAAIAEDTSLLLGIWASGGNVANEIAALKAAIAQYGADFGKHVVGISVGSEDLYRNSVDGVKSKAGLGANPDDLVSYIHQVREAIAGTSLSGAPIGHVDTWTAWVNGSNSAVIDACDWLGFDGYPYFQNTMPNSISDAKALFDESVAKTQAVAKGKEVWITETGWPVSGKTENLAVANTANAKAYWDQVGCPLFGNTNTWWYILQDADPVTPNPSFGIVGSTLSTTPLFDLSCSAVSSSSAVPSATAAATAASGAGASGSQTSGFATAAAGSSSAAKPTFSVGKGPNGSYNGTYPGSWNSTRPGANGGSSGSSGSSGSSGSSGSSGSSGSGASGHSSSTGSSSFPSSTNLLSNSASGLSGSLFGAVAAVFVALAAL.

The signal sequence occupies residues 1–18; that stretch reads MQTRQLLALALAVAATEA. The active-site Proton donor is E128. N-linked (GlcNAc...) asparagine glycosylation occurs at N183. The active-site Nucleophile is E239. Residues N364, N368, and N376 are each glycosylated (N-linked (GlcNAc...) asparagine). A compositionally biased stretch (polar residues) spans 370 to 380; that stretch reads TYPGSWNSTRP. The tract at residues 370–423 is disordered; sequence TYPGSWNSTRPGANGGSSGSSGSSGSSGSSGSSGSSGSGASGHSSSTGSSSFPS. Composition is skewed to low complexity over residues 389–402 and 410–423; these read SSGS…SGSS and SGHS…SFPS. The GPI-anchor amidated asparagine moiety is linked to residue N430. A propeptide spans 431–453 (removed in mature form); it reads SASGLSGSLFGAVAAVFVALAAL.

It belongs to the glycosyl hydrolase 17 family. The GPI-anchor is attached to the protein in the endoplasmic reticulum and serves to target the protein to the cell surface. There, the glucosamine-inositol phospholipid moiety is cleaved off and the GPI-modified mannoprotein is covalently attached via its lipidless GPI glycan remnant to the 1,6-beta-glucan of the outer cell wall layer.

The protein localises to the cell membrane. The protein resides in the secreted. It localises to the cell wall. It catalyses the reaction Hydrolysis of (1-&gt;3)-beta-D-glucosidic linkages in (1-&gt;3)-beta-D-glucans.. Functionally, glucanases play a role in cell expansion during growth, in cell-cell fusion during mating, and in spore release during sporulation. This enzyme may be involved in beta-glucan degradation and also function biosynthetically as a transglycosylase. The protein is Probable glucan endo-1,3-beta-glucosidase eglC (eglC) of Aspergillus clavatus (strain ATCC 1007 / CBS 513.65 / DSM 816 / NCTC 3887 / NRRL 1 / QM 1276 / 107).